Reading from the N-terminus, the 295-residue chain is HTH-type transcriptional regulator TfdS (295 aa).

In terms of domain architecture, HTH lysR-type spans 1–58 (MEFRQLRYFVAAAEEGNVGAAARRLHISQPPVTRQIHALEQHLGVLLFERSARGVQLT). The H-T-H motif DNA-binding region spans 18–37 (VGAAARRLHISQPPVTRQIH).

It belongs to the LysR transcriptional regulatory family.

The protein localises to the cytoplasm. In terms of biological role, involved in the regulation of 3-chlorocatechol degradation. Transcriptional regulator of tfdB expression. Acts as a repressor in the absence of its effector (either 2-cis-chlorodiene lactone or chloromaleylacetate) but acts as an activator when its effector is present. This chain is HTH-type transcriptional regulator TfdS (tfdS), found in Cupriavidus pinatubonensis (strain JMP 134 / LMG 1197) (Cupriavidus necator (strain JMP 134)).